A 441-amino-acid chain; its full sequence is Serine hydroxymethyltransferase (441 aa).

Residue 124–126 coordinates (6S)-5,6,7,8-tetrahydrofolate; sequence GHI. The residue at position 239 (lysine 239) is an N6-(pyridoxal phosphate)lysine.

It belongs to the SHMT family. Homodimer. Requires pyridoxal 5'-phosphate as cofactor.

It localises to the cytoplasm. It functions in the pathway amino-acid biosynthesis; glycine biosynthesis; glycine from L-serine: step 1/1. Functionally, catalyzes the reversible interconversion of serine and glycine with a modified folate serving as the one-carbon carrier. Also exhibits a pteridine-independent aldolase activity toward beta-hydroxyamino acids, producing glycine and aldehydes, via a retro-aldol mechanism. The sequence is that of Serine hydroxymethyltransferase from Cenarchaeum symbiosum (strain A).